We begin with the raw amino-acid sequence, 129 residues long: Follitropin subunit beta (129 aa).

Residues 1-20 form the signal peptide; the sequence is MKTAQFYVLFFCWKAIWCNG. 6 disulfides stabilise this stretch: Cys-21–Cys-69, Cys-35–Cys-84, Cys-38–Cys-122, Cys-46–Cys-100, Cys-50–Cys-102, and Cys-105–Cys-112. Asn-25 and Asn-42 each carry an N-linked (GlcNAc...) asparagine glycan.

Belongs to the glycoprotein hormones subunit beta family. Heterodimer. The active follitropin is a heterodimer composed of an alpha chain/CGA shared with other hormones and a unique beta chain/FSHB shown here.

Its subcellular location is the secreted. Together with the alpha chain CGA constitutes follitropin, the follicle-stimulating hormone, and provides its biological specificity to the hormone heterodimer. Binds FSHR, a G protein-coupled receptor, on target cells to activate downstream signaling pathways. Follitropin is involved in follicle development and spermatogenesis in reproductive organs. The chain is Follitropin subunit beta (FSHB) from Trichosurus vulpecula (Brush-tailed possum).